The chain runs to 183 residues: Ribosome rescue factor SmrB (183 aa).

The Smr domain occupies 98–173 (LDLHGLTQLQ…GDAALLVLIE (76 aa)).

It belongs to the SmrB family. Associates with collided ribosomes, but not with correctly translating polysomes.

Acts as a ribosome collision sensor. Detects stalled/collided disomes (pairs of ribosomes where the leading ribosome is stalled and a second ribosome has collided with it) and endonucleolytically cleaves mRNA at the 5' boundary of the stalled ribosome. Stalled/collided disomes form a new interface (primarily via the 30S subunits) that binds SmrB. Cleaved mRNA becomes available for tmRNA ligation, leading to ribosomal subunit dissociation and rescue of stalled ribosomes. This Salmonella agona (strain SL483) protein is Ribosome rescue factor SmrB.